A 223-amino-acid chain; its full sequence is Probable transaldolase (223 aa).

Residue K92 is the Schiff-base intermediate with substrate of the active site.

This sequence belongs to the transaldolase family. Type 3B subfamily.

The protein localises to the cytoplasm. It catalyses the reaction D-sedoheptulose 7-phosphate + D-glyceraldehyde 3-phosphate = D-erythrose 4-phosphate + beta-D-fructose 6-phosphate. It participates in carbohydrate degradation; pentose phosphate pathway; D-glyceraldehyde 3-phosphate and beta-D-fructose 6-phosphate from D-ribose 5-phosphate and D-xylulose 5-phosphate (non-oxidative stage): step 2/3. Its function is as follows. Transaldolase is important for the balance of metabolites in the pentose-phosphate pathway. This Thermus thermophilus (strain ATCC BAA-163 / DSM 7039 / HB27) protein is Probable transaldolase.